Here is an 81-residue protein sequence, read N- to C-terminus: uncharacterized protein (81 aa).

Helical transmembrane passes span 27-47 (ASLL…LNLT) and 54-74 (IFGA…IFIM).

The protein localises to the cell membrane. This is an uncharacterized protein from Bacillus subtilis (strain 168).